The primary structure comprises 309 residues: 4-diphosphocytidyl-2-C-methyl-D-erythritol kinase (309 aa).

K28 is an active-site residue. 120–130 (PSQAGMGGGSS) provides a ligand contact to ATP. The active site involves D162.

Belongs to the GHMP kinase family. IspE subfamily.

The catalysed reaction is 4-CDP-2-C-methyl-D-erythritol + ATP = 4-CDP-2-C-methyl-D-erythritol 2-phosphate + ADP + H(+). Its pathway is isoprenoid biosynthesis; isopentenyl diphosphate biosynthesis via DXP pathway; isopentenyl diphosphate from 1-deoxy-D-xylulose 5-phosphate: step 3/6. Functionally, catalyzes the phosphorylation of the position 2 hydroxy group of 4-diphosphocytidyl-2C-methyl-D-erythritol. The sequence is that of 4-diphosphocytidyl-2-C-methyl-D-erythritol kinase from Polaromonas sp. (strain JS666 / ATCC BAA-500).